A 3420-amino-acid chain; its full sequence is Adhesin BmaC autotransporter (3420 aa).

The signal sequence occupies residues 1 to 72 (MPNLANQDFT…SLVMAGTAAA (72 aa)). The 283-residue stretch at 3138 to 3420 (GPSGNNGIWA…AGSVGLRVRW (283 aa)) folds into the Autotransporter domain.

The protein resides in the cell surface. It localises to the cell outer membrane. Fibronectin-binding protein, which is involved in adhesion to host cells and in the infective process. Mediates the binding of B.suis to the extracellular matrix and to non-phagocytic cells via cell-associated fibronectin. The sequence is that of Adhesin BmaC autotransporter from Brucella suis biovar 1 (strain 1330).